A 211-amino-acid chain; its full sequence is V-type ATP synthase subunit D (211 aa).

This sequence belongs to the V-ATPase D subunit family.

In terms of biological role, produces ATP from ADP in the presence of a proton gradient across the membrane. The sequence is that of V-type ATP synthase subunit D from Enterococcus faecalis (strain ATCC 700802 / V583).